A 190-amino-acid chain; its full sequence is MGDAIDLSGDGGVLKKIVRSAKPDAISPSDDLPVVDVHYEGILAEDEKVFDTTREDNLVFSFELGTGSVIRSWDIALKTMKVGEVAKITCKPEYAYGRAGSPPDIPPDATLIFEVELVACRPRKGASVGSVSEERARLEDLKKQREIAAAAKEDDKKKREEAKAAAAARIQAKLDAKKGPGKGKGKGKAK.

Residue glycine 2 is modified to N-acetylglycine. One can recognise a PPIase FKBP-type domain in the interval 32–121 (LPVVDVHYEG…IFEVELVACR (90 aa)). A compositionally biased stretch (basic and acidic residues) spans 149 to 163 (AAAKEDDKKKREEAK). Residues 149–190 (AAAKEDDKKKREEAKAAAAARIQAKLDAKKGPGKGKGKGKAK) form a disordered region. Over residues 179–190 (GPGKGKGKGKAK) the composition is skewed to basic residues.

The protein belongs to the FKBP-type PPIase family.

It catalyses the reaction [protein]-peptidylproline (omega=180) = [protein]-peptidylproline (omega=0). PPIases accelerate the folding of proteins. It catalyzes the cis-trans isomerization of proline imidic peptide bonds in oligopeptides. This Arabidopsis thaliana (Mouse-ear cress) protein is Peptidyl-prolyl cis-trans isomerase FKBP20-1 (FKBP20-1).